A 206-amino-acid chain; its full sequence is Large ribosomal subunit protein uL4 (206 aa).

The segment at 43-78 is disordered; that stretch reads ARSGNRKQKDREEVKHTTKKPWRQKGTGRARAGMSS. A compositionally biased stretch (basic and acidic residues) spans 49–58; sequence KQKDREEVKH. Residues 59–70 show a composition bias toward basic residues; it reads TTKKPWRQKGTG.

It belongs to the universal ribosomal protein uL4 family. In terms of assembly, part of the 50S ribosomal subunit.

One of the primary rRNA binding proteins, this protein initially binds near the 5'-end of the 23S rRNA. It is important during the early stages of 50S assembly. It makes multiple contacts with different domains of the 23S rRNA in the assembled 50S subunit and ribosome. Functionally, forms part of the polypeptide exit tunnel. This is Large ribosomal subunit protein uL4 from Cupriavidus metallidurans (strain ATCC 43123 / DSM 2839 / NBRC 102507 / CH34) (Ralstonia metallidurans).